A 269-amino-acid chain; its full sequence is UPF0354 protein YtpQ (269 aa).

The protein belongs to the UPF0354 family.

This Bacillus subtilis (strain 168) protein is UPF0354 protein YtpQ (ytpQ).